The chain runs to 130 residues: uncharacterized protein (130 aa).

The tract at residues 1 to 34 is disordered; it reads MTAVGGSPPTRRCPATEDRAPATVATPSSTDPTA.

The protein to M.tuberculosis Rv1583c.

This is an uncharacterized protein from Mycobacterium tuberculosis (strain CDC 1551 / Oshkosh).